A 20-amino-acid chain; its full sequence is Unknown protein NF040 from 2D-PAGE (20 aa).

Residues 1 to 20 (MKVYTDIFTRDEFLSDSYPM) enclose the TCTP domain.

The protein belongs to the TCTP family.

In Naegleria fowleri (Brain eating amoeba), this protein is Unknown protein NF040 from 2D-PAGE.